The chain runs to 109 residues: uncharacterized protein (109 aa).

It localises to the mitochondrion. This is an uncharacterized protein from Marchantia polymorpha (Common liverwort).